Consider the following 199-residue polypeptide: Dephospho-CoA kinase (199 aa).

Residues 3–199 enclose the DPCK domain; that stretch reads VLGLTGSIGM…AAAKMPRRRD (197 aa). Position 11 to 16 (11 to 16) interacts with ATP; sequence GMGKST.

The protein belongs to the CoaE family.

It localises to the cytoplasm. The enzyme catalyses 3'-dephospho-CoA + ATP = ADP + CoA + H(+). The protein operates within cofactor biosynthesis; coenzyme A biosynthesis; CoA from (R)-pantothenate: step 5/5. Functionally, catalyzes the phosphorylation of the 3'-hydroxyl group of dephosphocoenzyme A to form coenzyme A. This is Dephospho-CoA kinase from Rhodopseudomonas palustris (strain ATCC BAA-98 / CGA009).